Here is a 396-residue protein sequence, read N- to C-terminus: Purine ribonucleoside efflux pump NepI (396 aa).

The Cytoplasmic portion of the chain corresponds to 1-21 (MSEFIAENRGANAITRPNWSA). The helical transmembrane segment at 22–42 (VFSVAFCVACLIIVEFLPVSL) threads the bilayer. Residues 43–54 (LTPMAQDLGISE) are Periplasmic-facing. A helical transmembrane segment spans residues 55-75 (GVAGQSVTVTAFVAMFASLFI). Topologically, residues 76–85 (TQTIQATDRR) are cytoplasmic. A helical transmembrane segment spans residues 86-106 (YVVILFAVLLTLSCLLVSFAN). A topological domain (periplasmic) is located at residue serine 107. The helical transmembrane segment at 108 to 128 (FSLLLIGRACLGVALGGFWAI) threads the bilayer. The Cytoplasmic portion of the chain corresponds to 129-147 (SASLTMRLVPPRTVPKALS). The helical transmembrane segment at 148–168 (VIFGAVSIALVIAAPLGSFLG) threads the bilayer. The Periplasmic segment spans residues 169-175 (ELIGWRN). Residues 176-196 (VFNAAAAMGVLCIFWIIKSLP) traverse the membrane as a helical segment. The Cytoplasmic segment spans residues 197–215 (SLPGEPSHQKQNTFRLLQR). A helical membrane pass occupies residues 216-236 (PGVMAGMIAIFMSFAGQFAFF). Residues 237–255 (TYIRPVYMNLAGFGVDGLT) lie on the Periplasmic side of the membrane. A helical transmembrane segment spans residues 256 to 276 (LVLLSFGIASFVGTSLSSFIL). Topologically, residues 277-281 (KRSVK) are cytoplasmic. A helical membrane pass occupies residues 282–302 (LALAGAPFVLALSALVLTLWG). The Periplasmic segment spans residues 303-305 (SDK). A helical transmembrane segment spans residues 306-326 (IVATGVAIIWGLTFALIPVGW). Topologically, residues 327–343 (STWITRSLADQAEKAGS) are cytoplasmic. The helical transmembrane segment at 344 to 364 (IQVAVIQLANTCGAAIGGYAL) threads the bilayer. Over 365 to 366 (DN) the chain is Periplasmic. Residues 367–387 (IGLTSPLMLSGTLMLLTALLV) traverse the membrane as a helical segment. Topologically, residues 388-396 (TAKVKMKKS) are cytoplasmic.

This sequence belongs to the major facilitator superfamily. DHA1 family. NepI (TC 2.A.1.2.26) subfamily.

It is found in the cell inner membrane. It catalyses the reaction inosine(in) + H(+)(out) = inosine(out) + H(+)(in). The catalysed reaction is guanosine(in) + H(+)(out) = guanosine(out) + H(+)(in). Functionally, involved in the efflux of purine ribonucleosides, such as inosine and guanosine. The sequence is that of Purine ribonucleoside efflux pump NepI from Escherichia coli O6:K15:H31 (strain 536 / UPEC).